The sequence spans 562 residues: Phosphatidylinositol 4-phosphate 5-kinase type-1 alpha (562 aa).

The 369-residue stretch at 81-449 (TSSALKGAIQ…RFQRFMCNTV (369 aa)) folds into the PIPK domain. Residue Lys103 forms a Glycyl lysine isopeptide (Lys-Gly) (interchain with G-Cter in ubiquitin) linkage. Ser486 is modified (phosphoserine). A disordered region spans residues 506 to 526 (HLGRPDVLPQTPPLEEISEGS).

In terms of assembly, interacts with RAC1. Interacts with TUT1. Forms a complex with CDH1/E-cadherin, CTNNB1/beta-catenin and CTNND1 at the plasma membrane upon calcium stimulation. Found in a ternary complex with IRS1 and DGKZ in the absence of insulin stimulation. Interacts with DGKZ. Interacts with PIP4K2C; the interaction inhibits PIP5K1A kinase activity. Highly expressed in heart, placenta, skeletal muscle, kidney and pancreas. Detected at lower levels in brain, lung and liver.

The protein localises to the cell membrane. The protein resides in the cytoplasm. Its subcellular location is the nucleus. It localises to the nucleus speckle. It is found in the cell projection. The protein localises to the ruffle. The protein resides in the lamellipodium. The catalysed reaction is a 1,2-diacyl-sn-glycero-3-phospho-(1D-myo-inositol 4-phosphate) + ATP = a 1,2-diacyl-sn-glycero-3-phospho-(1D-myo-inositol-4,5-bisphosphate) + ADP + H(+). It catalyses the reaction 1-octadecanoyl-2-(5Z,8Z,11Z,14Z)-eicosatetraenoyl-sn-glycero-3-phospho-1D-myo-inositol 4-phosphate + ATP = 1-octadecanoyl-2-(5Z,8Z,11Z,14Z)-eicosatetraenoyl-sn-glycero-3-phospho-1D-myo-inositol 4,5-bisphosphate + ADP + H(+). It carries out the reaction 1,2-dihexadecanoyl-sn-glycero-3-phospho-(1D-myo-inositol-4-phosphate) + ATP = 1,2-dihexadecanoyl-sn-glycero-3-phospho-(1D-myo-inositol-4,5-bisphosphate) + ADP + H(+). The enzyme catalyses 1-octadecanoyl-2-(9Z)-octadecenoyl-sn-glycero-3-phospho-1D-myo-inositol 4-phosphate + ATP = 1-octadecanoyl-2-(9Z)-octadecenoyl-sn-glycero-3-phospho-1D-myo-inositol 4,5-bisphosphate + ADP + H(+). The catalysed reaction is 1-octadecanoyl-2-(9Z)-octadecenoyl-sn-glycero-3-phospho-1D-myo-inositol + ATP = 1-octadecanoyl-2-(9Z)-octadecenoyl-sn-glycero-3-phospho-1D-myo-inositol 5-phosphate + ADP + H(+). It catalyses the reaction 1-octadecanoyl-2-(9Z,12Z)-octadecadienoyl-sn-glycero-3-phospho-1D-myo-inositol + ATP = 1-octadecanoyl-2-(9Z,12Z)-octadecadienoyl-sn-glycero-3-phospho-1D-myo-inositol 5-phosphate + ADP + H(+). It carries out the reaction 1-octadecanoyl-2-(5Z,8Z,11Z,14Z-eicosatetraenoyl)-sn-glycero-3-phospho-(1D-myo-inositol) + ATP = 1-octadecanoyl-2-(5Z,8Z,11Z,14Z)-eicosatetraenoyl-sn-glycero-3-phospho-1D-myo-inositol 5-phosphate + ADP + H(+). The enzyme catalyses 1,2-di-(9Z,12Z)-octadecadienoyl-sn-glycero-3-phospho-1D-myo-inositol + ATP = 1,2-di(9Z,12Z)-octadecadienoyl-sn-glycero-3-phospho-1D-myo-inositol 5-phosphate + ADP + H(+). Activated by diarachidonoyl phosphatidic acid (DAPA), when 1,2-dipalmitoyl-PI4P is used as a substrate. Functionally, catalyzes the phosphorylation of phosphatidylinositol 4-phosphate (PtdIns(4)P/PI4P) to form phosphatidylinositol 4,5-bisphosphate (PtdIns(4,5)P2/PIP2), a lipid second messenger that regulates several cellular processes such as signal transduction, vesicle trafficking, actin cytoskeleton dynamics, cell adhesion, and cell motility. PtdIns(4,5)P2 can directly act as a second messenger or can be utilized as a precursor to generate other second messengers: inositol 1,4,5-trisphosphate (IP3), diacylglycerol (DAG) or phosphatidylinositol-3,4,5-trisphosphate (PtdIns(3,4,5)P3/PIP3). PIP5K1A-mediated phosphorylation of PtdIns(4)P is the predominant pathway for PtdIns(4,5)P2 synthesis. Can also use phosphatidylinositol (PtdIns) as substrate in vitro. Together with PIP5K1C, is required for phagocytosis, both enzymes regulating different types of actin remodeling at sequential steps. Promotes particle ingestion by activating the WAS GTPase-binding protein that induces Arp2/3 dependent actin polymerization at the nascent phagocytic cup. Together with PIP5K1B, is required, after stimulation by G-protein coupled receptors, for the synthesis of IP3 that will induce stable platelet adhesion. Recruited to the plasma membrane by the E-cadherin/beta-catenin complex where it provides the substrate PtdIns(4,5)P2 for the production of PtdIns(3,4,5)P3, IP3 and DAG, that will mobilize internal calcium and drive keratinocyte differentiation. Positively regulates insulin-induced translocation of SLC2A4 to the cell membrane in adipocytes. Together with PIP5K1C has a role during embryogenesis. Independently of its catalytic activity, is required for membrane ruffling formation, actin organization and focal adhesion formation during directional cell migration by controlling integrin-induced translocation of the small GTPase RAC1 to the plasma membrane. Also functions in the nucleus where it acts as an activator of TUT1 adenylyltransferase activity in nuclear speckles, thereby regulating mRNA polyadenylation of a select set of mRNAs. The chain is Phosphatidylinositol 4-phosphate 5-kinase type-1 alpha from Homo sapiens (Human).